A 137-amino-acid chain; its full sequence is Large ribosomal subunit protein uL16 (137 aa).

This sequence belongs to the universal ribosomal protein uL16 family. As to quaternary structure, part of the 50S ribosomal subunit.

Its function is as follows. Binds 23S rRNA and is also seen to make contacts with the A and possibly P site tRNAs. In Roseobacter denitrificans (strain ATCC 33942 / OCh 114) (Erythrobacter sp. (strain OCh 114)), this protein is Large ribosomal subunit protein uL16.